The primary structure comprises 264 residues: Teichoic acids export ATP-binding protein TagH (264 aa).

The ABC transporter domain occupies 24–243; it reads IKDALIPKNK…YEAFLKTFKK (220 aa). 57-64 lines the ATP pocket; the sequence is GINGSGKS.

The protein belongs to the ABC transporter superfamily. Teichoic acids exporter (TC 3.A.1.104.1) family. As to quaternary structure, the complex is composed of two ATP-binding proteins (TagH) and two transmembrane proteins (TagG).

Its subcellular location is the cell membrane. It carries out the reaction ATP + H2O + teichoic acidSide 1 = ADP + phosphate + teichoic acidSide 2.. In terms of biological role, part of the ABC transporter complex TagGH involved in teichoic acids export. Responsible for energy coupling to the transport system. The protein is Teichoic acids export ATP-binding protein TagH of Staphylococcus epidermidis (strain ATCC 35984 / DSM 28319 / BCRC 17069 / CCUG 31568 / BM 3577 / RP62A).